Reading from the N-terminus, the 124-residue chain is Glycine cleavage system H protein (124 aa).

A Lipoyl-binding domain is found at 22–104 (VATVGITEFA…YGAGWLFRVE (83 aa)). Lys-63 carries the N6-lipoyllysine modification.

The protein belongs to the GcvH family. In terms of assembly, the glycine cleavage system is composed of four proteins: P, T, L and H. (R)-lipoate serves as cofactor.

In terms of biological role, the glycine cleavage system catalyzes the degradation of glycine. The H protein shuttles the methylamine group of glycine from the P protein to the T protein. The chain is Glycine cleavage system H protein from Beutenbergia cavernae (strain ATCC BAA-8 / DSM 12333 / CCUG 43141 / JCM 11478 / NBRC 16432 / NCIMB 13614 / HKI 0122).